We begin with the raw amino-acid sequence, 229 residues long: Cytochrome c oxidase subunit 2 (229 aa).

Residues 1–26 are Mitochondrial intermembrane-facing; sequence MATWAQFGLQDASSPLMEELTYFHDY. The helical transmembrane segment at 27–48 threads the bilayer; sequence ALIVLTLITILVFYGLVSLLLS. At 49-62 the chain is on the mitochondrial matrix side; it reads SSTNRFFLEGQELE. The chain crosses the membrane as a helical span at residues 63–82; sequence TIWTVVPAFILIFIALPSLQ. Residues 83-229 are Mitochondrial intermembrane-facing; the sequence is LLYLMDEVNN…ENWVAQYIEE (147 aa). Cu cation contacts are provided by His-161, Cys-196, Glu-198, Cys-200, His-204, and Met-207. Glu-198 is a Mg(2+) binding site.

This sequence belongs to the cytochrome c oxidase subunit 2 family. As to quaternary structure, component of the cytochrome c oxidase (complex IV, CIV), a multisubunit enzyme composed of a catalytic core of 3 subunits and several supernumerary subunits. The complex exists as a monomer or a dimer and forms supercomplexes (SCs) in the inner mitochondrial membrane with ubiquinol-cytochrome c oxidoreductase (cytochrome b-c1 complex, complex III, CIII). The cofactor is Cu cation.

The protein resides in the mitochondrion inner membrane. The catalysed reaction is 4 Fe(II)-[cytochrome c] + O2 + 8 H(+)(in) = 4 Fe(III)-[cytochrome c] + 2 H2O + 4 H(+)(out). In terms of biological role, component of the cytochrome c oxidase, the last enzyme in the mitochondrial electron transport chain which drives oxidative phosphorylation. The respiratory chain contains 3 multisubunit complexes succinate dehydrogenase (complex II, CII), ubiquinol-cytochrome c oxidoreductase (cytochrome b-c1 complex, complex III, CIII) and cytochrome c oxidase (complex IV, CIV), that cooperate to transfer electrons derived from NADH and succinate to molecular oxygen, creating an electrochemical gradient over the inner membrane that drives transmembrane transport and the ATP synthase. Cytochrome c oxidase is the component of the respiratory chain that catalyzes the reduction of oxygen to water. Electrons originating from reduced cytochrome c in the intermembrane space (IMS) are transferred via the dinuclear copper A center (CU(A)) of subunit 2 and heme A of subunit 1 to the active site in subunit 1, a binuclear center (BNC) formed by heme A3 and copper B (CU(B)). The BNC reduces molecular oxygen to 2 water molecules using 4 electrons from cytochrome c in the IMS and 4 protons from the mitochondrial matrix. This Paracentrotus lividus (Common sea urchin) protein is Cytochrome c oxidase subunit 2 (COII).